A 131-amino-acid polypeptide reads, in one-letter code: Small ribosomal subunit protein uS8 (131 aa).

It belongs to the universal ribosomal protein uS8 family. Part of the 30S ribosomal subunit. Contacts proteins S5 and S12.

One of the primary rRNA binding proteins, it binds directly to 16S rRNA central domain where it helps coordinate assembly of the platform of the 30S subunit. The chain is Small ribosomal subunit protein uS8 from Variovorax paradoxus (strain S110).